We begin with the raw amino-acid sequence, 839 residues long: Probable inorganic carbon transporter subunit DabA (839 aa).

Positions 353, 355, 537, and 552 each coordinate Zn(2+).

This sequence belongs to the inorganic carbon transporter (TC 9.A.2) DabA family. In terms of assembly, forms a complex with DabB. Requires Zn(2+) as cofactor.

The protein localises to the cell membrane. Functionally, part of an energy-coupled inorganic carbon pump. In Chloroflexus aggregans (strain MD-66 / DSM 9485), this protein is Probable inorganic carbon transporter subunit DabA.